Reading from the N-terminus, the 155-residue chain is MKLRVLAVGTRMPDWVTRGVDEYLKRLPRDFSVEIVEIAPGKRGKNADVARAIQGEGNAMLAKLRDQERVIALAVDGQHWSTERLAANADHWRQDGRDVALLVGGPDGLDPRLLSRVEQRWSLSALTLPHPLVRILLAEQLYRAWTLLAGHPYHR.

S-adenosyl-L-methionine contacts are provided by residues Leu73, Gly104, and 123 to 128 (LSALTL).

The protein belongs to the RNA methyltransferase RlmH family. As to quaternary structure, homodimer.

It is found in the cytoplasm. It carries out the reaction pseudouridine(1915) in 23S rRNA + S-adenosyl-L-methionine = N(3)-methylpseudouridine(1915) in 23S rRNA + S-adenosyl-L-homocysteine + H(+). Its function is as follows. Specifically methylates the pseudouridine at position 1915 (m3Psi1915) in 23S rRNA. The sequence is that of Ribosomal RNA large subunit methyltransferase H from Chromohalobacter salexigens (strain ATCC BAA-138 / DSM 3043 / CIP 106854 / NCIMB 13768 / 1H11).